A 402-amino-acid polypeptide reads, in one-letter code: CCA-adding enzyme (402 aa).

ATP contacts are provided by Gly32 and Arg35. CTP is bound by residues Gly32 and Arg35. 2 residues coordinate Mg(2+): Asp45 and Asp47. Residues Arg116, Asp159, Arg162, Arg165, and Arg168 each contribute to the ATP site. Residues Arg116, Asp159, Arg162, Arg165, and Arg168 each contribute to the CTP site.

Belongs to the tRNA nucleotidyltransferase/poly(A) polymerase family. Bacterial CCA-adding enzyme type 3 subfamily. In terms of assembly, homodimer. Requires Mg(2+) as cofactor.

It catalyses the reaction a tRNA precursor + 2 CTP + ATP = a tRNA with a 3' CCA end + 3 diphosphate. It carries out the reaction a tRNA with a 3' CCA end + 2 CTP + ATP = a tRNA with a 3' CCACCA end + 3 diphosphate. Functionally, catalyzes the addition and repair of the essential 3'-terminal CCA sequence in tRNAs without using a nucleic acid template. Adds these three nucleotides in the order of C, C, and A to the tRNA nucleotide-73, using CTP and ATP as substrates and producing inorganic pyrophosphate. tRNA 3'-terminal CCA addition is required both for tRNA processing and repair. Also involved in tRNA surveillance by mediating tandem CCA addition to generate a CCACCA at the 3' terminus of unstable tRNAs. While stable tRNAs receive only 3'-terminal CCA, unstable tRNAs are marked with CCACCA and rapidly degraded. The chain is CCA-adding enzyme from Streptococcus pyogenes serotype M1.